A 370-amino-acid chain; its full sequence is Putative glutamate--cysteine ligase 2 (370 aa).

Belongs to the glutamate--cysteine ligase type 2 family. YbdK subfamily.

It carries out the reaction L-cysteine + L-glutamate + ATP = gamma-L-glutamyl-L-cysteine + ADP + phosphate + H(+). Functionally, ATP-dependent carboxylate-amine ligase which exhibits weak glutamate--cysteine ligase activity. In Janthinobacterium sp. (strain Marseille) (Minibacterium massiliensis), this protein is Putative glutamate--cysteine ligase 2.